The sequence spans 1112 residues: DNA repair protein rad13 (1112 aa).

The N-domain stretch occupies residues 1–95 (MGVSGLWDIL…QTIQKRQARR (95 aa)). Mg(2+)-binding residues include aspartate 30 and aspartate 77. Residues 395-414 (TDDLILQLATQQSLEENKKS) form the UIM domain. The interval 742–870 (KRSEKRDADE…LALEILHEFP (129 aa)) is I-domain. Glutamate 777, glutamate 779, aspartate 798, aspartate 800, and aspartate 849 together coordinate Mg(2+). Residues 1056-1112 (KMMASKNSSDSDSDSEDNFLASLTPKTNSSSISIENLPRKTKLSTSLLKKPSKRRRK) form a disordered region. Polar residues predominate over residues 1079–1089 (TPKTNSSSISI).

The protein belongs to the XPG/RAD2 endonuclease family. XPG subfamily. Requires Mg(2+) as cofactor.

The protein resides in the nucleus. Its function is as follows. Single-stranded DNA endonuclease involved in excision repair of DNA damaged with UV light, bulky adducts, or cross-linking agents. Essential for the incision step of excision-repair. This Schizosaccharomyces pombe (strain 972 / ATCC 24843) (Fission yeast) protein is DNA repair protein rad13 (rad13).